The primary structure comprises 536 residues: Hydroxylamine oxidoreductase (536 aa).

A signal peptide spans Met1–Ala26. Heme c-binding residues include Cys116, Cys119, His120, His136, Cys160, Cys163, His164, His168, Cys179, Cys182, His183, His198, Cys223, Cys226, His227, Cys234, Cys237, His238, His241, Cys254, Cys257, and His258. A hydroxylamine-binding site is contributed by His263. Residues His274, Cys301, Cys304, His305, His311, Cys346, Cys349, His350, His443, and Tyr451 each contribute to the heme c site.

In terms of assembly, homotrimer; subunits are linked by two covalent bonds between Tyr-451 of one subunit and heme P460 of an adjacent subunit. Requires heme c as cofactor.

Its subcellular location is the anammoxosome. It carries out the reaction hydroxylamine + 3 Fe(III)-[cytochrome c] = nitric oxide + 3 Fe(II)-[cytochrome c] + 3 H(+). In terms of biological role, catalyzes the oxidation of hydroxylamine to nitric oxide with cytochrome c acting as an electron acceptor. Does not oxidize hydroxylamine to nitrite. Also able to catalyze the four-electron oxidation of hydrazine to N(2) in vitro with reduced efficiency; however, this reaction is probably not physiological. The sequence is that of Hydroxylamine oxidoreductase from Kuenenia stuttgartiensis.